Here is a 388-residue protein sequence, read N- to C-terminus: Venom acid phosphatase Acph-1 (388 aa).

Residues 1–15 form the signal peptide; the sequence is MSVIAILAMVVGVQA. His-26 serves as the catalytic Nucleophile. 2 cysteine pairs are disulfide-bonded: Cys-145–Cys-355 and Cys-330–Cys-334. N-linked (GlcNAc...) asparagine glycans are attached at residues Asn-182 and Asn-228. The active-site Proton donor is the Glu-273. Asn-366 carries an N-linked (GlcNAc...) asparagine glycan.

It belongs to the histidine acid phosphatase family. In terms of tissue distribution, expressed by the venom gland.

The protein resides in the secreted. It carries out the reaction a phosphate monoester + H2O = an alcohol + phosphate. In Apis mellifera (Honeybee), this protein is Venom acid phosphatase Acph-1.